A 137-amino-acid chain; its full sequence is uncharacterized protein (137 aa).

4 helical membrane passes run 14 to 34, 48 to 68, 84 to 104, and 109 to 129; these read AVVV…GSIS, YHII…SLSI, FFTI…LGLT, and HIPS…LNLF.

Its subcellular location is the cell membrane. This is an uncharacterized protein from Methanocaldococcus jannaschii (strain ATCC 43067 / DSM 2661 / JAL-1 / JCM 10045 / NBRC 100440) (Methanococcus jannaschii).